The chain runs to 301 residues: Ribosomal RNA small subunit methyltransferase H (301 aa).

S-adenosyl-L-methionine contacts are provided by residues 35–37, Asp-55, Phe-84, Asp-105, and Gln-112; that span reads GGH.

The protein belongs to the methyltransferase superfamily. RsmH family.

It is found in the cytoplasm. The enzyme catalyses cytidine(1402) in 16S rRNA + S-adenosyl-L-methionine = N(4)-methylcytidine(1402) in 16S rRNA + S-adenosyl-L-homocysteine + H(+). In terms of biological role, specifically methylates the N4 position of cytidine in position 1402 (C1402) of 16S rRNA. This is Ribosomal RNA small subunit methyltransferase H from Chloroflexus aggregans (strain MD-66 / DSM 9485).